A 251-amino-acid polypeptide reads, in one-letter code: Blue-light absorbing proteorhodopsin (251 aa).

Positions 1–18 (MGKLLLILGSAIALPSFA) are cleaved as a signal peptide. The next 7 helical transmembrane spans lie at 30-50 (VGVS…FFFV), 65-85 (VSGL…GVWI), 97-117 (IDWL…LAAC), 120-140 (VAAS…GAGF), 144-164 (AGLA…LYMI), 190-210 (MMMI…AGYL), and 223-243 (LIYN…IWNV). N6-(retinylidene)lysine is present on Lys233.

Belongs to the archaeal/bacterial/fungal opsin family. Post-translationally, contains one covalently linked retinal chromophore.

The protein resides in the cell membrane. Light-driven proton pump. May have a regulatory rather than energy harvesting function, based on light-induced opening of proton channels, to modulate cell physiology depending on light intensity variations. Could be, therefore, a sensory rhodopsin, potentially associated with a transducer component. The protein is Blue-light absorbing proteorhodopsin of Gamma-proteobacterium Hot 75m4.